We begin with the raw amino-acid sequence, 309 residues long: Tumor necrosis factor ligand superfamily member 13B (309 aa).

Over 1–47 (MDESAKTLPPPCLCFCSEKGEDMKVGYDPITPQKEEGAWFGICRDGR) the chain is Cytoplasmic. A helical; Signal-anchor for type II membrane protein transmembrane segment spans residues 48 to 68 (LLAATLLLALLSSSFTAMSLY). Residues 69-309 (QLAALQADLM…DTFFGALKLL (241 aa)) are Extracellular-facing. The segment at 110–140 (PAAPRPHNSSRGHRNRRAFQGPEETEQDVDL) is disordered. Asparagine 117 and asparagine 266 each carry an N-linked (GlcNAc...) asparagine glycan. Over residues 117-126 (NSSRGHRNRR) the composition is skewed to basic residues. One can recognise a THD domain in the interval 169–308 (DCLQLIADSD…DDTFFGALKL (140 aa)). Cysteine 256 and cysteine 269 form a disulfide bridge.

The protein belongs to the tumor necrosis factor family. Homotrimer. Isoform 2 heteromultimerizes with isoform 1, probably limiting the amount of functional isoform 1 on the cell surface. In terms of processing, the soluble form derives from the membrane form by proteolytic processing. Post-translationally, isoform 2 is not efficiently shed from the membrane unlike isoform 1. In terms of tissue distribution, isoform 2 is expressed in many myeloid cell lines.

Its subcellular location is the cell membrane. The protein localises to the secreted. Functionally, cytokine that binds to TNFRSF13B/TACI and TNFRSF17/BCMA. TNFSF13/APRIL binds to the same 2 receptors. Together, they form a 2 ligands -2 receptors pathway involved in the stimulation of B- and T-cell function and the regulation of humoral immunity. A third B-cell specific BAFF-receptor (BAFFR/BR3) promotes the survival of mature B-cells and the B-cell response. In terms of biological role, isoform 2 seems to inhibit isoform 1 secretion and bioactivity. The sequence is that of Tumor necrosis factor ligand superfamily member 13B (Tnfsf13b) from Mus musculus (Mouse).